A 250-amino-acid polypeptide reads, in one-letter code: 5-oxoprolinase subunit A (250 aa).

It belongs to the LamB/PxpA family. Forms a complex composed of PxpA, PxpB and PxpC.

It carries out the reaction 5-oxo-L-proline + ATP + 2 H2O = L-glutamate + ADP + phosphate + H(+). Catalyzes the cleavage of 5-oxoproline to form L-glutamate coupled to the hydrolysis of ATP to ADP and inorganic phosphate. This chain is 5-oxoprolinase subunit A, found in Staphylococcus haemolyticus (strain JCSC1435).